The sequence spans 93 residues: Alpha-defensin 3 (93 aa).

A signal peptide spans 1-16 (MKTLVLLSALVLLAFQ). Positions 17 to 58 (VQADPIQNTDEETKTEEQPGEDDQAVSVSFGDPEGSSLQEES) are excised as a propeptide. The segment at 22–56 (IQNTDEETKTEEQPGEDDQAVSVSFGDPEGSSLQE) is disordered. 3 cysteine pairs are disulfide-bonded: Cys64-Cys92, Cys66-Cys81, and Cys71-Cys91.

Belongs to the alpha-defensin family. In terms of tissue distribution, paneth cells of the small bowel.

It localises to the secreted. Probably contributes to the antimicrobial barrier function of the small bowel mucosa. The chain is Alpha-defensin 3 (Defa3) from Mus musculus (Mouse).